Reading from the N-terminus, the 37-residue chain is Large ribosomal subunit protein bL36 (37 aa).

This sequence belongs to the bacterial ribosomal protein bL36 family.

The chain is Large ribosomal subunit protein bL36 from Vibrio atlanticus (strain LGP32) (Vibrio splendidus (strain Mel32)).